Consider the following 65-residue polypeptide: Large ribosomal subunit protein bL35 (65 aa).

Composition is skewed to basic residues over residues 1 to 15 (MPKMKTKKSASKRFT) and 26 to 44 (QAFKRHILTKKTTKNKRQL). Residues 1 to 65 (MPKMKTKKSA…KSVRAMMPYA (65 aa)) form a disordered region.

Belongs to the bacterial ribosomal protein bL35 family.

The protein is Large ribosomal subunit protein bL35 of Ralstonia nicotianae (strain ATCC BAA-1114 / GMI1000) (Ralstonia solanacearum).